We begin with the raw amino-acid sequence, 948 residues long: Coatomer subunit beta-1 (948 aa).

6 HEAT repeats span residues 49–87 (ETIPQLFITIIRYVLPSEDHTIQKLLLLYLELIEKTDSK), 92–126 (PEMILICQNLRNNLQHPNEYIRGVTLRFLCRMKET), 127–164 (EIVEPLTPSVLQNLEHRHPFVRRNAILAIMSIYKLPQG), 274–311 (TAIRAAANTYCQLLLSQSDNNVKLILLDRLYELKTLHR), 312–349 (DIMVELIIDVLRALSSPNLDIRRKTLDISLDLITHHNI), and 391–428 (EVASTVVHLLMDFLGDSNVASALDVVVFVREIIETNPK).

As to quaternary structure, oligomeric complex that consists of at least the alpha, beta, beta', gamma, delta, epsilon and zeta subunits.

It localises to the cytoplasm. The protein resides in the golgi apparatus membrane. Its subcellular location is the cytoplasmic vesicle. It is found in the COPI-coated vesicle membrane. The coatomer is a cytosolic protein complex that binds to dilysine motifs and reversibly associates with Golgi non-clathrin-coated vesicles, which further mediate biosynthetic protein transport from the ER, via the Golgi up to the trans Golgi network. Coatomer complex is required for budding from Golgi membranes, and is essential for the retrograde Golgi-to-ER transport of dilysine-tagged proteins. The sequence is that of Coatomer subunit beta-1 from Arabidopsis thaliana (Mouse-ear cress).